A 127-amino-acid polypeptide reads, in one-letter code: MAIVGLGTDIVEIERIEAHVARSGDKLARRVLTEAELAIYIAHSQPSRYLAKRFAAKEAAAKALGTGIGRGVSFQHIHIGNTPDGAPTIRFTDGAQQRLAFLNGIFGHISIADEKSYAIATVILESC.

Mg(2+) is bound by residues D9 and E58.

The protein belongs to the P-Pant transferase superfamily. AcpS family. Mg(2+) serves as cofactor.

The protein localises to the cytoplasm. The enzyme catalyses apo-[ACP] + CoA = holo-[ACP] + adenosine 3',5'-bisphosphate + H(+). Transfers the 4'-phosphopantetheine moiety from coenzyme A to a Ser of acyl-carrier-protein. This is Holo-[acyl-carrier-protein] synthase from Shewanella sp. (strain W3-18-1).